We begin with the raw amino-acid sequence, 1151 residues long: Syntaxin-binding protein 5 (1151 aa).

A disordered region spans residues 14–34 (TAGSSSASQQQQQQHPPGNRE). Residues 17 to 27 (SSSASQQQQQQ) are compositionally biased toward low complexity. WD repeat units lie at residues 61–94 (SALA…CYCQ), 101–140 (VIQL…SLKF), 145–181 (VTFC…GYVI), 200–234 (HISD…DYRY), 240–272 (IHSV…PAKP), 294–336 (PILK…KSTA), 344–378 (IVDF…LIDL), 400–477 (TCCE…YKLK), 505–619 (QIIS…ELVI), and 633–695 (TSLA…SGAG). Disordered regions lie at residues 555-595 (ETPE…GLRD) and 674-729 (SNDP…EQKM). Serine 692 carries the phosphoserine modification. A compositionally biased stretch (low complexity) spans 712-721 (SPTSGSSSPH). Serine 723 carries the post-translational modification Phosphoserine; by PKA. The residue at position 759 (serine 759) is a Phosphoserine. Position 762 is a phosphothreonine (threonine 762). A Phosphoserine modification is found at serine 782. Threonine 784 bears the Phosphothreonine mark. Residue serine 785 is modified to Phosphoserine. 4 WD repeats span residues 794 to 851 (ISAL…SGTI), 860 to 934 (RMAF…QNCA), 939 to 983 (ITET…LDVY), and 997 to 1020 (CFTN…TYSQ). The span at 881–892 (HNVPEEKDEKEK) shows a compositional bias: basic and acidic residues. The interval 881–906 (HNVPEEKDEKEKLKKRRPVSVSPSSS) is disordered. Residues serine 900 and serine 902 each carry the phosphoserine modification. Threonine 1039 carries the post-translational modification Phosphothreonine. A phosphoserine mark is found at serine 1058 and serine 1131. The v-SNARE coiled-coil homology domain maps to 1086-1146 (GIEGVKGAAS…HEIMLKYKDK (61 aa)).

This sequence belongs to the WD repeat L(2)GL family. In terms of assembly, interacts with STX1A and STX1B via its v-SNARE homology domain. Part of a complex that contains STX1, STXBP5, SNAP25 and SYT1. Part of a complex that contains STXBP5, STX4A and SNAP23.

Its subcellular location is the cytoplasm. The protein resides in the cell membrane. It is found in the cytoplasmic vesicle membrane. It localises to the cytoplasmic vesicle. The protein localises to the secretory vesicle. Its subcellular location is the synaptic vesicle. The protein resides in the synapse. Its function is as follows. Plays a regulatory role in calcium-dependent exocytosis and neurotransmitter release. Inhibits membrane fusion between transport vesicles and the plasma membrane. May modulate the assembly of trans-SNARE complexes between transport vesicles and the plasma membrane. Inhibits translocation of GLUT4 from intracellular vesicles to the plasma membrane. Competes with STXBP1 for STX1 binding. The chain is Syntaxin-binding protein 5 (STXBP5) from Homo sapiens (Human).